Reading from the N-terminus, the 695-residue chain is Glycine--tRNA ligase beta subunit (695 aa).

Belongs to the class-II aminoacyl-tRNA synthetase family. In terms of assembly, tetramer of two alpha and two beta subunits.

It localises to the cytoplasm. It carries out the reaction tRNA(Gly) + glycine + ATP = glycyl-tRNA(Gly) + AMP + diphosphate. This is Glycine--tRNA ligase beta subunit from Desulforamulus reducens (strain ATCC BAA-1160 / DSM 100696 / MI-1) (Desulfotomaculum reducens).